Reading from the N-terminus, the 135-residue chain is Small ribosomal subunit protein uS12 (135 aa).

Asp-89 is modified (3-methylthioaspartic acid). The tract at residues 106-135 (GVANRRQSRSKYGAKRPKAGAAQATKGGKK) is disordered. Residues 111–123 (RQSRSKYGAKRPK) show a composition bias toward basic residues. A compositionally biased stretch (low complexity) spans 124–135 (AGAAQATKGGKK).

It belongs to the universal ribosomal protein uS12 family. As to quaternary structure, part of the 30S ribosomal subunit. Contacts proteins S8 and S17. May interact with IF1 in the 30S initiation complex.

Functionally, with S4 and S5 plays an important role in translational accuracy. Its function is as follows. Interacts with and stabilizes bases of the 16S rRNA that are involved in tRNA selection in the A site and with the mRNA backbone. Located at the interface of the 30S and 50S subunits, it traverses the body of the 30S subunit contacting proteins on the other side and probably holding the rRNA structure together. The combined cluster of proteins S8, S12 and S17 appears to hold together the shoulder and platform of the 30S subunit. In Hydrogenobaculum sp. (strain Y04AAS1), this protein is Small ribosomal subunit protein uS12.